A 60-amino-acid polypeptide reads, in one-letter code: Large ribosomal subunit protein uL30 (60 aa).

Belongs to the universal ribosomal protein uL30 family. Part of the 50S ribosomal subunit.

The chain is Large ribosomal subunit protein uL30 from Xanthobacter autotrophicus (strain ATCC BAA-1158 / Py2).